A 228-amino-acid polypeptide reads, in one-letter code: MLNKLSAEFFGTFWLVFGGCGSAILAAAFPELGIGFLGVALAFGLTVLTMAYAVGGISGGHFNPAVSLGLTVAGRLPAKDLIPYWVAQVLGAIAAAAILYVIASGKDGFSAGGLASNGYGELSPGGYSMMAGLLIEIILTAFFIIIILGSTSSLAPAGFAPIAIGFGLTLIHLVSIPVTNTWVNPARSTGVALFADTAALSQLWLFWVAPLVGAVIGAIIWKGLLGRD.

The next 2 membrane-spanning stretches (helical) occupy residues 1-21 (MLNKLSAEFFGTFWLVFGGCG) and 23-43 (AILAAAFPELGIGFLGVALAF). Positions 63–65 (NPA) match the NPA 1 motif. Helical transmembrane passes span 82–102 (IPYWVAQVLGAIAAAAILYVI), 129–149 (MMAGLLIEIILTAFFIIIILG), and 154–174 (LAPAGFAPIAIGFGLTLIHLV). The short motif at 184-186 (NPA) is the NPA 2 element. A helical membrane pass occupies residues 205–225 (LFWVAPLVGAVIGAIIWKGLL).

This sequence belongs to the MIP/aquaporin (TC 1.A.8) family. In terms of assembly, homotetramer.

It localises to the cell inner membrane. The enzyme catalyses H2O(in) = H2O(out). Functionally, channel that permits osmotically driven movement of water in both directions. It is involved in the osmoregulation and in the maintenance of cell turgor during volume expansion in rapidly growing cells. It mediates rapid entry or exit of water in response to abrupt changes in osmolarity. This Brucella melitensis biotype 1 (strain ATCC 23456 / CCUG 17765 / NCTC 10094 / 16M) protein is Aquaporin Z.